Consider the following 180-residue polypeptide: DNA replication regulator protein HobA (180 aa).

5 residues coordinate Ca(2+): Glu-17, Glu-27, Glu-140, Glu-143, and Asn-176.

As to quaternary structure, forms dimers and homotetramers. Interacts with domains I and II (residues 1-112) of DnaA. In a crystal with domains I and II of DnaA HobA forms tetramers with DnaA fragments bound at the dimer interface of the tetramer. Ca(2+) serves as cofactor.

Its function is as follows. Required for DNA replication initiation. Increases binding of DnaA to oriC region. This Helicobacter pylori (strain ATCC 700392 / 26695) (Campylobacter pylori) protein is DNA replication regulator protein HobA.